A 492-amino-acid chain; its full sequence is Tyrosinase-like protein 1 (492 aa).

An N-terminal signal peptide occupies residues 1–22; sequence MDKMRTLQSLIVKLTLLYGALC. Cu cation-binding residues include H147, H155, H164, H289, H293, and H316. The disordered stretch occupies residues 472 to 492; sequence SEPPLQLEGPSFTSSFDDPRI. Residues 482–492 are compositionally biased toward polar residues; that stretch reads SFTSSFDDPRI.

Requires Cu(2+) as cofactor. Prismatic layer of shell (at protein level). Expressed primarily in the mantle with highest level in the mantle edge and lower level in the mantle pallium.

It localises to the secreted. The polypeptide is Tyrosinase-like protein 1 (Margaritifera margaritifera (Freshwater pearl mussel)).